The following is a 431-amino-acid chain: Alpha-gurjunene synthase (431 aa).

The Mg(2+) site is built by D126 and D130. A (2E,6E)-farnesyl diphosphate-binding site is contributed by R267. Residues N321 and S325 each coordinate Mg(2+). Residue K328 participates in (2E,6E)-farnesyl diphosphate binding. E329 lines the Mg(2+) pocket. Residue 412–413 (RY) coordinates (2E,6E)-farnesyl diphosphate.

This sequence belongs to the terpene synthase family. It depends on Mg(2+) as a cofactor.

It carries out the reaction (2E,6E)-farnesyl diphosphate = (-)-alpha-gurjunene + diphosphate. It catalyses the reaction (2E,6E)-farnesyl diphosphate + H2O = 5-hydroxy-alpha-gurjunene + diphosphate. The protein operates within secondary metabolite biosynthesis; terpenoid biosynthesis. In terms of biological role, catalyzes the conversion of (2E,6E)-farnesyl diphosphate (FPP) into the sesquiterpene alcohols (-)-alpha-gurjunene and 5-hydroxy-alpha-gurjunene. Other unidentified sesquiterpene alcohols found to be catalyzed by MTPSL4 may arise from carbocation reaction intermediates along the catalytic cascade to gurjunene being quenched by a water molecule, yielding formation of the alcohols. The polypeptide is Alpha-gurjunene synthase (Marchantia polymorpha (Common liverwort)).